Here is a 248-residue protein sequence, read N- to C-terminus: ATP synthase subunit a (248 aa).

Helical transmembrane passes span 34–54, 91–111, 121–141, 147–167, 196–216, and 220–240; these read TNATLWMALAALAITALLVFG, YFPYVMTLFCFILFANFLGLL, IAVTAVLAVLVFAGVTVLGFV, FLGLFWVSSAPLALRPVLAVI, VFAAFAAVAAIAPVSVVAITA, and LEVLVCLIQAYVFTILTCVYL.

It belongs to the ATPase A chain family. In terms of assembly, F-type ATPases have 2 components, CF(1) - the catalytic core - and CF(0) - the membrane proton channel. CF(1) has five subunits: alpha(3), beta(3), gamma(1), delta(1), epsilon(1). CF(0) has three main subunits: a(1), b(2) and c(9-12). The alpha and beta chains form an alternating ring which encloses part of the gamma chain. CF(1) is attached to CF(0) by a central stalk formed by the gamma and epsilon chains, while a peripheral stalk is formed by the delta and b chains.

Its subcellular location is the cell inner membrane. Functionally, key component of the proton channel; it plays a direct role in the translocation of protons across the membrane. This chain is ATP synthase subunit a, found in Paracoccus denitrificans (strain Pd 1222).